The chain runs to 793 residues: MDSNNNNNNENEAFSGASESSEFRKIVEENENEREFEQSNPSPPEYSNYENKDDGINLETINPNISLDNNNNNNQNNQNNQNNNNNNNNQNNNIINNLNKKNKKRSTFKNRIDFSFKDINHYVQITEKGKKKKISKQILTNINGHIESGTIFAIMGPSGAGKTTLLDILAHRLNINGSGTMYLNGNKSDFNIFKKLCGYVTQSDSLMPSLTVRETLNFYAQLKMPRDVPLKEKLQRVQDIIDEMGLNRCADTLVGTADNKIRGISGGERRRVTISIELLTGPSVILLDEPTSGLDASTSFYVMSALKKLAKSGRTIICTIHQPRSNIYDMFDNLLLLGDGNTIYYGKANKALEYFNANGYHCSEKTNPADFFLDLINTQVEDQADSDDDDYNDEEEEIGGGGGGSGGGAGGIEDIGISISPTMNGSAVDNIKNNELKQQQQQQQQQQQSTDGRARRRIKKLTKEEMVILKKEYPNSEQGLRVNETLDNISKENRTDFKYEKTRGPNFLTQFSLLLGREVTNAKRHPMAFKVNLIQAIFQGLLCGIVYYQLGLGQSSVQSRTGVVAFIIMGVSFPAVMSTIHVFPDVITIFLKDRASGVYDTLPFFLAKSFMDACIAVLLPMVTATIVYWMTNQRVDPFYSAAPFFRFVLMLVLASQTCLSLGVLISSSVPNVQVGTAVAPLIVILFFLFSGFFINLNDVPGWLVWFPYISFFRYMIEAAVINAFKDVHFTCTDSQKIGGVCPVQYGNNVIENMGYDIDHFWRNVWILVLYIIGFRVLTFLVLKLKSRNKFKQE.

The segment covering 1-20 has biased composition (low complexity); it reads MDSNNNNNNENEAFSGASES. The tract at residues 1-96 is disordered; sequence MDSNNNNNNE…NNNQNNNIIN (96 aa). The span at 21–37 shows a compositional bias: basic and acidic residues; it reads SEFRKIVEENENEREFE. Over residues 59-68 the composition is skewed to polar residues; sequence ETINPNISLD. Residues 67–102 are a coiled coil; it reads LDNNNNNNQNNQNNQNNNNNNNNQNNNIINNLNKKN. Over residues 69 to 96 the composition is skewed to low complexity; it reads NNNNNNQNNQNNQNNNNNNNNQNNNIIN. Residues 123–364 form the ABC transporter domain; the sequence is VQITEKGKKK…FNANGYHCSE (242 aa). Residue 156–163 coordinates ATP; sequence GPSGAGKT. Residues 382-398 show a composition bias toward acidic residues; the sequence is DQADSDDDDYNDEEEEI. The interval 382-457 is disordered; it reads DQADSDDDDY…QSTDGRARRR (76 aa). Residues 399-413 are compositionally biased toward gly residues; that stretch reads GGGGGGSGGGAGGIE. Residues 421 to 437 show a composition bias toward polar residues; that stretch reads PTMNGSAVDNIKNNELK. Positions 438–448 are enriched in low complexity; the sequence is QQQQQQQQQQQ. The region spanning 527–785 is the ABC transmembrane type-2 domain; the sequence is MAFKVNLIQA…VLTFLVLKLK (259 aa). The next 7 membrane-spanning stretches (helical) occupy residues 533-553, 563-583, 610-630, 647-667, 674-694, 701-721, and 764-784; these read LIQA…LGLG, VVAF…IHVF, FMDA…VYWM, FVLM…LISS, VGTA…GFFI, GWLV…AAVI, and VWIL…VLKL.

The protein belongs to the ABC transporter superfamily. ABCG family.

Its subcellular location is the membrane. The polypeptide is ABC transporter G family member 1 (abcG1) (Dictyostelium discoideum (Social amoeba)).